Here is a 307-residue protein sequence, read N- to C-terminus: Putative flagellar export/assembly protein LafU (307 aa).

A helical transmembrane segment spans residues 32–54; the sequence is AWKVAFADFTLAMMALFMTLWIV. Positions 87 to 108 are disordered; it reads SPSHPPKPATVAAPEETEKKAR. The OmpA-like domain occupies 154 to 272; sequence LRVLIKDDQN…RIEIMVLTKS (119 aa).

The protein belongs to the MotB family.

The protein resides in the cell inner membrane. In terms of biological role, part of the flagellar gene cluster Flag-2. However, the Flag-2 flagellar system could be inactive in strain 042 due to a frameshift in lfgC. The sequence is that of Putative flagellar export/assembly protein LafU from Escherichia coli O44:H18 (strain 042 / EAEC).